Here is a 172-residue protein sequence, read N- to C-terminus: Peptide methionine sulfoxide reductase MsrA 2 (172 aa).

Residue C12 is part of the active site.

The protein belongs to the MsrA Met sulfoxide reductase family.

The catalysed reaction is L-methionyl-[protein] + [thioredoxin]-disulfide + H2O = L-methionyl-(S)-S-oxide-[protein] + [thioredoxin]-dithiol. It carries out the reaction [thioredoxin]-disulfide + L-methionine + H2O = L-methionine (S)-S-oxide + [thioredoxin]-dithiol. Functionally, has an important function as a repair enzyme for proteins that have been inactivated by oxidation. Catalyzes the reversible oxidation-reduction of methionine sulfoxide in proteins to methionine. The chain is Peptide methionine sulfoxide reductase MsrA 2 (msrA2) from Lactococcus lactis subsp. lactis (strain IL1403) (Streptococcus lactis).